Consider the following 166-residue polypeptide: Ribosome maturation factor RimM (166 aa).

The region spanning 90 to 163 (EGEFLVSQII…TVTIELLEGL (74 aa)) is the PRC barrel domain.

It belongs to the RimM family. In terms of assembly, binds ribosomal protein uS19.

The protein resides in the cytoplasm. Functionally, an accessory protein needed during the final step in the assembly of 30S ribosomal subunit, possibly for assembly of the head region. Essential for efficient processing of 16S rRNA. May be needed both before and after RbfA during the maturation of 16S rRNA. It has affinity for free ribosomal 30S subunits but not for 70S ribosomes. In Oenococcus oeni (strain ATCC BAA-331 / PSU-1), this protein is Ribosome maturation factor RimM.